An 80-amino-acid chain; its full sequence is Small ribosomal subunit protein bS18 (80 aa).

It belongs to the bacterial ribosomal protein bS18 family. Part of the 30S ribosomal subunit. Forms a tight heterodimer with protein bS6.

In terms of biological role, binds as a heterodimer with protein bS6 to the central domain of the 16S rRNA, where it helps stabilize the platform of the 30S subunit. This is Small ribosomal subunit protein bS18 from Beijerinckia indica subsp. indica (strain ATCC 9039 / DSM 1715 / NCIMB 8712).